The following is a 276-amino-acid chain: UPF0276 protein CV_3513 (276 aa).

Belongs to the UPF0276 family.

This is UPF0276 protein CV_3513 from Chromobacterium violaceum (strain ATCC 12472 / DSM 30191 / JCM 1249 / CCUG 213 / NBRC 12614 / NCIMB 9131 / NCTC 9757 / MK).